Reading from the N-terminus, the 539-residue chain is Membrane protein insertase YidC (539 aa).

5 helical membrane-spanning segments follow: residues 6–26 (TLLV…WQVA), 341–361 (SVIQ…TFIV), 416–436 (LGGC…YWAL), 454–474 (LSAQ…MFLI), and 495–515 (PVMF…YWLV).

It belongs to the OXA1/ALB3/YidC family. Type 1 subfamily. As to quaternary structure, interacts with the Sec translocase complex via SecD. Specifically interacts with transmembrane segments of nascent integral membrane proteins during membrane integration.

It is found in the cell inner membrane. Its function is as follows. Required for the insertion and/or proper folding and/or complex formation of integral membrane proteins into the membrane. Involved in integration of membrane proteins that insert both dependently and independently of the Sec translocase complex, as well as at least some lipoproteins. Aids folding of multispanning membrane proteins. This Vibrio vulnificus (strain CMCP6) protein is Membrane protein insertase YidC.